The primary structure comprises 359 residues: MIALPQDRMDQLLKRFSMIESQMANNPDSDTYVKLASEYSELQDVVGKIRELSDARMEASDLAAMRDDASTDAEMRALAVEELPEVEKRIAVLEQDVQILLLPKDAADDKNAILEIRAGTGGLEAALFAGDLFRMYERYAAEKGWRVELVSASEGDAGGYKEIIATVSGKGVFSKLKFESGVHRVQRVPETEAGGRIHTSAATVAVLPEAEDIDIEIRNEDIRIDTMRASGAGGQHVNTTDSAVRITHIPTGIMVVQAEKSQHQNRARAMQILRARLYDMERQKAESERSQARRSQVGSGDRSERIRTYNFPQGRVTDHRINLTLYKLDRVMEGDLDELVDALISDHQTALLAELGEQP.

Position 235 is an N5-methylglutamine (Gln235). Positions 283–309 (QKAESERSQARRSQVGSGDRSERIRTY) are disordered.

It belongs to the prokaryotic/mitochondrial release factor family. Methylated by PrmC. Methylation increases the termination efficiency of RF1.

Its subcellular location is the cytoplasm. In terms of biological role, peptide chain release factor 1 directs the termination of translation in response to the peptide chain termination codons UAG and UAA. The polypeptide is Peptide chain release factor 1 (Brucella canis (strain ATCC 23365 / NCTC 10854 / RM-666)).